A 177-amino-acid polypeptide reads, in one-letter code: ATP synthase subunit delta (177 aa).

The protein belongs to the ATPase delta chain family. In terms of assembly, F-type ATPases have 2 components, F(1) - the catalytic core - and F(0) - the membrane proton channel. F(1) has five subunits: alpha(3), beta(3), gamma(1), delta(1), epsilon(1). F(0) has three main subunits: a(1), b(2) and c(10-14). The alpha and beta chains form an alternating ring which encloses part of the gamma chain. F(1) is attached to F(0) by a central stalk formed by the gamma and epsilon chains, while a peripheral stalk is formed by the delta and b chains.

The protein resides in the cell inner membrane. Functionally, f(1)F(0) ATP synthase produces ATP from ADP in the presence of a proton or sodium gradient. F-type ATPases consist of two structural domains, F(1) containing the extramembraneous catalytic core and F(0) containing the membrane proton channel, linked together by a central stalk and a peripheral stalk. During catalysis, ATP synthesis in the catalytic domain of F(1) is coupled via a rotary mechanism of the central stalk subunits to proton translocation. This protein is part of the stalk that links CF(0) to CF(1). It either transmits conformational changes from CF(0) to CF(1) or is implicated in proton conduction. The chain is ATP synthase subunit delta from Shigella boydii serotype 18 (strain CDC 3083-94 / BS512).